The following is a 116-amino-acid chain: NADH-ubiquinone oxidoreductase chain 3 (116 aa).

The next 3 helical transmembrane spans lie at 3–23 (LITTIITITITLSAVLATISF), 56–76 (FFLIAILFLLFDLEIALLLPL), and 85–105 (PALTLVWSTAVLALLTLGLIY).

The protein belongs to the complex I subunit 3 family.

The protein resides in the mitochondrion membrane. It catalyses the reaction a ubiquinone + NADH + 5 H(+)(in) = a ubiquinol + NAD(+) + 4 H(+)(out). Core subunit of the mitochondrial membrane respiratory chain NADH dehydrogenase (Complex I) that is believed to belong to the minimal assembly required for catalysis. Complex I functions in the transfer of electrons from NADH to the respiratory chain. The immediate electron acceptor for the enzyme is believed to be ubiquinone. The chain is NADH-ubiquinone oxidoreductase chain 3 (MT-ND3) from Oncorhynchus masou (Cherry salmon).